The following is a 281-amino-acid chain: Release factor glutamine methyltransferase (281 aa).

Residues E141 and N185 each contribute to the S-adenosyl-L-methionine site. 185-188 (NPPY) is a substrate binding site.

The protein belongs to the protein N5-glutamine methyltransferase family. PrmC subfamily.

The enzyme catalyses L-glutaminyl-[peptide chain release factor] + S-adenosyl-L-methionine = N(5)-methyl-L-glutaminyl-[peptide chain release factor] + S-adenosyl-L-homocysteine + H(+). Methylates the class 1 translation termination release factors RF1/PrfA and RF2/PrfB on the glutamine residue of the universally conserved GGQ motif. The protein is Release factor glutamine methyltransferase of Mycolicibacterium smegmatis (strain ATCC 700084 / mc(2)155) (Mycobacterium smegmatis).